A 639-amino-acid polypeptide reads, in one-letter code: MINITLKDGKVIEVEKGVKVSDIVMKISPALYKKAVGAKINGEIAELMTEIKEDSELEILTFDDEEGRKTVRHTSSHILAQAVKRLYPEAKLAIGPAIDNGFYYDFDIDFTFTPEMLEKIEKEMAKIVKENLEIERFELPREEAIKLVKDASEPYKVELIEDLPEGEVISFYKQGDFVDLCAGPHLPSTGKIKAIKLLSVAGAYWRGDEKNKMLQRIYGTAFLKKSELEAYLKMLEEAKRRDHRKLGKELDLFTINEEGPGFPFFHPKGMVVRNILENFWREKHTKAGYDEIRTPVILNEELWHRSGHWDHYKENMYFTKIDNENFAIKPMNCPGSILVYKSHLHSYKEFPMRLGELGLVHRHELSGALHGLMRVRCFTQDDAHIFMTKEQIKDEILNVIKLIDSFYKVFGFEYFVELSTRPEDSMGSDEDWEVATNGLKNALEGAGLEYKINEGDGAFYGPKIDFHLKDCIGRTWQCGTIQLDFQMPERFDLTYVGQDGEKHRPVMVHRVVFGSIERFIGILIEHFAGAFPTWLAPVQVKVMTITDSQKDYANKVVNDLKEKGIRVEFDDRNEKIGYKIREAQLQKVPYMIILGDKEVSENKVAVRSRKEGDLGAISLKEFVAKLNYEIDNRIVENSK.

In terms of domain architecture, TGS spans 1-61; that stretch reads MINITLKDGK…KEDSELEILT (61 aa). The segment at 242–532 is catalytic; the sequence is DHRKLGKELD…LIEHFAGAFP (291 aa). 3 residues coordinate Zn(2+): Cys-333, His-384, and His-509.

This sequence belongs to the class-II aminoacyl-tRNA synthetase family. In terms of assembly, homodimer. Zn(2+) is required as a cofactor.

Its subcellular location is the cytoplasm. The enzyme catalyses tRNA(Thr) + L-threonine + ATP = L-threonyl-tRNA(Thr) + AMP + diphosphate + H(+). In terms of biological role, catalyzes the attachment of threonine to tRNA(Thr) in a two-step reaction: L-threonine is first activated by ATP to form Thr-AMP and then transferred to the acceptor end of tRNA(Thr). Also edits incorrectly charged L-seryl-tRNA(Thr). This Clostridium tetani (strain Massachusetts / E88) protein is Threonine--tRNA ligase.